Reading from the N-terminus, the 124-residue chain is 14 kDa peptide of ubiquinol-cytochrome c2 oxidoreductase complex (124 aa).

A helical transmembrane segment spans residues 85–102 (LGGFASGALLALALAGIF).

The protein resides in the cell inner membrane. Component of the ubiquinol-cytochrome c reductase complex (complex III or cytochrome b-c1 complex), which is a respiratory chain that generates an electrochemical potential coupled to ATP synthesis. This is 14 kDa peptide of ubiquinol-cytochrome c2 oxidoreductase complex from Cereibacter sphaeroides (Rhodobacter sphaeroides).